Reading from the N-terminus, the 1513-residue chain is DNA-directed RNA polymerase subunit beta'' (1513 aa).

Cys-220, Cys-296, Cys-303, and Cys-306 together coordinate Zn(2+). Positions 644 to 769 (RTREKDSENE…EYGNPEEDSV (126 aa)) are disordered. The span at 659 to 679 (NEYRTREEECKTLEDEYRTRE) shows a compositional bias: basic and acidic residues. Residues 680–707 (EEYETLEDEYGIPENEYETLEDEYGILE) are compositionally biased toward acidic residues. The span at 726 to 737 (NKYRPREDKYGT) shows a compositional bias: basic and acidic residues. Over residues 738 to 767 (LEEDSEDEHGTLEEDSEEDSEDEYGNPEED) the composition is skewed to acidic residues.

Belongs to the RNA polymerase beta' chain family. RpoC2 subfamily. In plastids the minimal PEP RNA polymerase catalytic core is composed of four subunits: alpha, beta, beta', and beta''. When a (nuclear-encoded) sigma factor is associated with the core the holoenzyme is formed, which can initiate transcription. The cofactor is Zn(2+).

Its subcellular location is the plastid. It is found in the chloroplast. It carries out the reaction RNA(n) + a ribonucleoside 5'-triphosphate = RNA(n+1) + diphosphate. Its function is as follows. DNA-dependent RNA polymerase catalyzes the transcription of DNA into RNA using the four ribonucleoside triphosphates as substrates. This chain is DNA-directed RNA polymerase subunit beta'', found in Oryza nivara (Indian wild rice).